A 539-amino-acid polypeptide reads, in one-letter code: MHTWRFRRPFREPAINRTDRMRDHFSIDHKRTPRRRLSVKAILALDQGTTSSRAILFAHDGSIIGVSQKEFTQHYPKPGWVEHDATEIWTTQLAVARDVLKQHDMDVSDIEAIGITNQRETTLVWDRATGEPIHNAIVWQDRRTASDCDALRNAGHSDCVQKKTGLIIDAYFCATKLRWILDNVAGARERAENGELAFGTIDSWLFWNLTGGKLHATDVTNASRTMLWNIHTGQWDDELLALFKVPKEVLPSVHPSSHIYGETESSLFGKSIPLGGAAGDQQSALFGQNCTQPGMAKNTYGTGCFMLMNIGEEAAASPSRLLTTVACWDGGKREYAYEGSIFIAGAIVQWLRDGLGIIQSSSEVESLAASVDDTDGVYLVPAFAGLGAPHWDAYARGILVGLTRGTTKAHIARAALEGIAFQVADVLDAMRKDSGVAIEELRVDGGAAANDLLMQFQADIIGARVVRPKVIETTAAGAAYVAGLATGFWKDSADIERIWETDRVFEPQMPAEEVARRRRRWAAALERSKQWVEQEASAD.

T49 provides a ligand contact to ADP. ATP-binding residues include T49, T50, and S51. Position 49 (T49) interacts with sn-glycerol 3-phosphate. R53 is a binding site for ADP. Positions 119, 120, 171, and 280 each coordinate sn-glycerol 3-phosphate. Positions 119, 120, 171, 280, and 281 each coordinate glycerol. Residues T302 and G345 each contribute to the ADP site. ATP is bound by residues T302, G345, Q349, and G446. The ADP site is built by G446 and N450.

This sequence belongs to the FGGY kinase family.

It carries out the reaction glycerol + ATP = sn-glycerol 3-phosphate + ADP + H(+). Its pathway is polyol metabolism; glycerol degradation via glycerol kinase pathway; sn-glycerol 3-phosphate from glycerol: step 1/1. Inhibited by fructose 1,6-bisphosphate (FBP). Functionally, key enzyme in the regulation of glycerol uptake and metabolism. Catalyzes the phosphorylation of glycerol to yield sn-glycerol 3-phosphate. This is Glycerol kinase from Rhodopirellula baltica (strain DSM 10527 / NCIMB 13988 / SH1).